The sequence spans 275 residues: Digeranylgeranylglyceryl phosphate synthase (275 aa).

Transmembrane regions (helical) follow at residues 12–32 (VHNV…ATTW), 35–55 (TPLF…GYVI), 88–108 (IVLF…PFGF), 125–145 (KLGL…AYYG), 146–166 (GLAS…IFFF), 200–220 (WIIA…PYFL), 224–244 (VIYL…LILH), and 255–275 (SLMK…SLRI).

Belongs to the UbiA prenyltransferase family. DGGGP synthase subfamily. Requires Mg(2+) as cofactor.

It is found in the cell membrane. It catalyses the reaction sn-3-O-(geranylgeranyl)glycerol 1-phosphate + (2E,6E,10E)-geranylgeranyl diphosphate = 2,3-bis-O-(geranylgeranyl)-sn-glycerol 1-phosphate + diphosphate. Its pathway is membrane lipid metabolism; glycerophospholipid metabolism. Functionally, prenyltransferase that catalyzes the transfer of the geranylgeranyl moiety of geranylgeranyl diphosphate (GGPP) to the C2 hydroxyl of (S)-3-O-geranylgeranylglyceryl phosphate (GGGP). This reaction is the second ether-bond-formation step in the biosynthesis of archaeal membrane lipids. This Sulfolobus acidocaldarius (strain ATCC 33909 / DSM 639 / JCM 8929 / NBRC 15157 / NCIMB 11770) protein is Digeranylgeranylglyceryl phosphate synthase.